A 289-amino-acid chain; its full sequence is UPF0173 metal-dependent hydrolase H16_A2129 (289 aa).

The protein belongs to the UPF0173 family.

The protein is UPF0173 metal-dependent hydrolase H16_A2129 of Cupriavidus necator (strain ATCC 17699 / DSM 428 / KCTC 22496 / NCIMB 10442 / H16 / Stanier 337) (Ralstonia eutropha).